The primary structure comprises 983 residues: MDCHLSILVLLGCCVLSCSGELSPQPSNEVNLLDSKTIQGELGWISYPSHGWEEISGVDEHYTPIRTYQVCNVMDHSQNNWLRTNWVPRNSAQKIYVELKFTLRDCNSIPLVLGTCKETFNLYYMESDDHGVKFREHQFTKIDTIAADESFTQMDLGDRILKLNTEIREVGPVNKKGFYLAFQDVGACVALVSVRVYFKKCPFTVKNLAMFPDTVPMDSQSLVEVRGSCVNNSKEEDPPRMYCSTEGEWLVPIGKCTCNAGYEERGFICQACRPGFYKASDGAAKCAKCPPHSSTQEDGSMNCRCENNYFRAEKDPPSMACARPPSAPRNVISNINETSVILDWSWPLDTGGRKDITFNIICKKCGWNVRQCEPCSPNVRFLPRQLGLTNTTVTVTDLLAHTNYTFEIDAVNGVSELSSPPRQYAAVSITTNQAAPSPVMTIKKDRTSRNSISLSWQEPEHPNGIILDYEVKYYQKQEQETSYTILRARGTNVTISSLKPDTTYVFQIRARTAAGYGTNSRKFEFETSPDSFSISGENSHVVMIAISAAVAIIVLTVVTYVLVGRFCGYHKSKHSAEEKRLHFGNGHLKLPGLRTYVDPHTYEDPTQAVHEFAKELDATNISIDKVVGAGEFGEVCSGRLKLPSKKEISVAIKTLKVGYTEKQRRDFLGEASIMGQFDHPNIIRLEGVVTKSKPEMIVTEYMENGSLDSFLRKHDAQFTVIQLVGMLRGIASGMKYLSDMGYVHRDLAARNILINSNLVCKVSDFGLSRVLEDDPEAAYTTRGGKIPIRWTSPEAMSYRKFTSASDVWSYGIVLWEVMSYGERPYSQMSNQDVIKAVDERYRLPPPMDCPAALYQLMLDCWQKDRNNRPKFEQIVSILDKLIRNPGSLKIITSAAARPSNLLLDQSNVDIATFHTTGDWLNGMRTAHCKEIFTGVEYSSCDTIAKISTDDMKKVGVTVVGPQKKIISTIKALETQSKNGPVPV.

The first 20 residues, 1 to 20, serve as a signal peptide directing secretion; that stretch reads MDCHLSILVLLGCCVLSCSG. Residues 21–540 are Extracellular-facing; it reads ELSPQPSNEV…SFSISGENSH (520 aa). An Eph LBD domain is found at 29–206; sequence EVNLLDSKTI…YFKKCPFTVK (178 aa). N-linked (GlcNAc...) asparagine glycans are attached at residues Asn-231, Asn-336, Asn-390, Asn-403, and Asn-492. Fibronectin type-III domains follow at residues 324-434 and 435-530; these read PPSA…TNQA and APSP…TSPD. A helical membrane pass occupies residues 541 to 564; it reads VVMIAISAAVAIIVLTVVTYVLVG. Topologically, residues 565–983 are cytoplasmic; that stretch reads RFCGYHKSKH…TQSKNGPVPV (419 aa). Phosphotyrosine; by autocatalysis is present on residues Tyr-596 and Tyr-602. The 262-residue stretch at 621-882 folds into the Protein kinase domain; that stretch reads ISIDKVVGAG…QIVSILDKLI (262 aa). ATP-binding positions include 628 to 633, Lys-653, and 700 to 706; these read GAGEFG and EYMENGS. Position 701 is a phosphotyrosine; by autocatalysis (Tyr-701). Asp-746 serves as the catalytic Proton acceptor. 750 to 751 is an ATP binding site; the sequence is RN. Tyr-779 is subject to Phosphotyrosine; by autocatalysis. The SAM domain occupies 911–975; that stretch reads ATFHTTGDWL…ISTIKALETQ (65 aa). Tyr-937 is subject to Phosphotyrosine. The short motif at 981–983 is the PDZ-binding element; sequence VPV.

This sequence belongs to the protein kinase superfamily. Tyr protein kinase family. Ephrin receptor subfamily. In terms of assembly, heterotetramer upon binding of the ligand. The heterotetramer is composed of an ephrin dimer and a receptor dimer. Oligomerization is probably required to induce biological responses. Forms a ternary EFNA5-EPHA3-ADAM10 complex mediating EFNA5 extracellular domain shedding by ADAM10 which regulates the EFNA5-EPHA3 complex internalization and function. Interacts (phosphorylated) with PTPN1; dephosphorylates EPHA3 and may regulate its trafficking and function. Interacts (phosphorylated) with CRK; mediates EFNA5-EPHA3 signaling through RHOA GTPase activation. Interacts with NCK1 (via SH2 domain); mediates EFNA5-EPHA3 signaling. In terms of processing, autophosphorylates upon activation by EFNA5. Phosphorylation on Tyr-602 mediates interaction with NCK1. Dephosphorylated by PTPN1. As to expression, greatest levels of expression occurring in the brain, also detected in testis. Expressed in myogenic progenitor cells.

The protein localises to the cell membrane. Its subcellular location is the secreted. It carries out the reaction L-tyrosyl-[protein] + ATP = O-phospho-L-tyrosyl-[protein] + ADP + H(+). Functionally, receptor tyrosine kinase which binds promiscuously membrane-bound ephrin family ligands residing on adjacent cells, leading to contact-dependent bidirectional signaling into neighboring cells. The signaling pathway downstream of the receptor is referred to as forward signaling while the signaling pathway downstream of the ephrin ligand is referred to as reverse signaling. Highly promiscuous for ephrin-A ligands it binds preferentially EFNA5. Upon activation by EFNA5 regulates cell-cell adhesion, cytoskeletal organization and cell migration. Plays a role in cardiac cells migration and differentiation and regulates the formation of the atrioventricular canal and septum during development probably through activation by EFNA1. Involved in the retinotectal mapping of neurons. May also control the segregation but not the guidance of motor and sensory axons during neuromuscular circuit development. The chain is Ephrin type-A receptor 3 (Epha3) from Mus musculus (Mouse).